The following is a 373-amino-acid chain: Forkhead box protein E1 (373 aa).

Residues 19–51 (KEERGETAAGAGVPGEATGRGAGGRRRKRPLQR) form a disordered region. Basic residues predominate over residues 41–50 (GGRRRKRPLQ). Residues 53–147 (KPPYSYIALI…ESGSFLRRRK (95 aa)) constitute a DNA-binding region (fork-head).

In terms of processing, phosphorylated. In terms of tissue distribution, detected in adult brain, placenta, lung, liver, skeletal muscle, kidney, pancreas, heart, colon, small intestine testis and thymus. Expression was strongest in heart and pancreas.

It is found in the nucleus. Transcription factor that binds consensus sites on a variety of gene promoters and activate their transcription. Involved in proper palate formation, most probably through the expression of MSX1 and TGFB3 genes which are direct targets of this transcription factor. Also implicated in thyroid gland morphogenesis. May indirectly play a role in cell growth and migration through the regulation of WNT5A expression. This chain is Forkhead box protein E1 (FOXE1), found in Homo sapiens (Human).